A 209-amino-acid polypeptide reads, in one-letter code: Uracil phosphoribosyltransferase (209 aa).

Residues Arg79, Arg104, and 131–139 each bind 5-phospho-alpha-D-ribose 1-diphosphate; that span reads DPMLATGGS. Uracil contacts are provided by residues Ile194 and 199-201; that span reads GDA. Residue Asp200 coordinates 5-phospho-alpha-D-ribose 1-diphosphate.

It belongs to the UPRTase family. It depends on Mg(2+) as a cofactor.

It carries out the reaction UMP + diphosphate = 5-phospho-alpha-D-ribose 1-diphosphate + uracil. The protein operates within pyrimidine metabolism; UMP biosynthesis via salvage pathway; UMP from uracil: step 1/1. With respect to regulation, allosterically activated by GTP. In terms of biological role, catalyzes the conversion of uracil and 5-phospho-alpha-D-ribose 1-diphosphate (PRPP) to UMP and diphosphate. The polypeptide is Uracil phosphoribosyltransferase (Bacillus velezensis (strain DSM 23117 / BGSC 10A6 / LMG 26770 / FZB42) (Bacillus amyloliquefaciens subsp. plantarum)).